Reading from the N-terminus, the 436-residue chain is Glutamyl-tRNA reductase 2 (436 aa).

Residues 49–52 (TCNR), serine 106, 111–113 (EPQ), and glutamine 117 contribute to the substrate site. Residue cysteine 50 is the Nucleophile of the active site. Position 186–191 (186–191 (GAGKMC)) interacts with NADP(+).

The protein belongs to the glutamyl-tRNA reductase family. As to quaternary structure, homodimer.

The enzyme catalyses (S)-4-amino-5-oxopentanoate + tRNA(Glu) + NADP(+) = L-glutamyl-tRNA(Glu) + NADPH + H(+). It participates in porphyrin-containing compound metabolism; protoporphyrin-IX biosynthesis; 5-aminolevulinate from L-glutamyl-tRNA(Glu): step 1/2. In terms of biological role, catalyzes the NADPH-dependent reduction of glutamyl-tRNA(Glu) to glutamate 1-semialdehyde (GSA). The sequence is that of Glutamyl-tRNA reductase 2 from Koribacter versatilis (strain Ellin345).